The sequence spans 1894 residues: Plexin-A2 (1894 aa).

An N-terminal signal peptide occupies residues 1–34; the sequence is MEQRRPWPRALEVDSRSVVLLSVVWVLLAPPAAG. The Sema domain maps to 35–508; that stretch reads MPQFSTFHSE…SERQVTRVPV (474 aa). At 35-1237 the chain is on the extracellular side; sequence MPQFSTFHSE…VISDSLLTLP (1203 aa). N-linked (GlcNAc...) asparagine glycosylation is found at asparagine 76 and asparagine 91. 10 disulfides stabilise this stretch: cysteine 94–cysteine 103, cysteine 129–cysteine 137, cysteine 284–cysteine 405, cysteine 300–cysteine 356, cysteine 374–cysteine 393, cysteine 511–cysteine 528, cysteine 517–cysteine 559, cysteine 520–cysteine 537, cysteine 531–cysteine 543, and cysteine 594–cysteine 613. Asparagine 327 carries an N-linked (GlcNAc...) asparagine glycan. Asparagine 598, asparagine 696, and asparagine 756 each carry an N-linked (GlcNAc...) asparagine glycan. 4 IPT/TIG domains span residues 858-951, 954-1037, 1041-1139, and 1143-1228; these read PQIT…QYTF, PSVL…QFEY, PRVQ…KFIY, and PTFE…SVSV. N-linked (GlcNAc...) asparagine glycosylation is present at asparagine 1205. A helical membrane pass occupies residues 1238-1258; sequence AIVSIAAGGSLLLIIVIIVLI. The Cytoplasmic segment spans residues 1259-1894; it reads AYKRKSREND…QLINAMSIES (636 aa). Positions 1261–1310 form a coiled coil; that stretch reads KRKSRENDLTLKRLQMQMDNLESRVALECKEAFAELQTDINELTSDLDRS. Serine 1612 is modified (phosphoserine).

Belongs to the plexin family. Homodimer. The PLXNA2 homodimer interacts with a SEMA6A homodimer, giving rise to a heterotetramer. Interacts directly with NRP1 and NRP2. Interacts with RND1. Detected in fetal brain.

The protein resides in the cell membrane. Coreceptor for SEMA3A and SEMA6A. Necessary for signaling by SEMA6A and class 3 semaphorins and subsequent remodeling of the cytoskeleton. Plays a role in axon guidance, invasive growth and cell migration. Class 3 semaphorins bind to a complex composed of a neuropilin and a plexin. The plexin modulates the affinity of the complex for specific semaphorins, and its cytoplasmic domain is required for the activation of down-stream signaling events in the cytoplasm. The polypeptide is Plexin-A2 (PLXNA2) (Homo sapiens (Human)).